The chain runs to 98 residues: MSLIHINILMAFTMSLVGLLMYRSHLMSALLCLEGMVLSLFILMTLTILNSHFTLANMVPIILLVFAACEAAIGLALLVMVSNTYGTDYVQNLNLLQC.

The next 3 helical transmembrane spans lie at 1-21 (MSLIHINILMAFTMSLVGLLM), 29-49 (ALLCLEGMVLSLFILMTLTIL), and 61-81 (IILLVFAACEAAIGLALLVMV).

It belongs to the complex I subunit 4L family. In terms of assembly, core subunit of respiratory chain NADH dehydrogenase (Complex I) which is composed of 45 different subunits.

It is found in the mitochondrion inner membrane. The catalysed reaction is a ubiquinone + NADH + 5 H(+)(in) = a ubiquinol + NAD(+) + 4 H(+)(out). Functionally, core subunit of the mitochondrial membrane respiratory chain NADH dehydrogenase (Complex I) which catalyzes electron transfer from NADH through the respiratory chain, using ubiquinone as an electron acceptor. Part of the enzyme membrane arm which is embedded in the lipid bilayer and involved in proton translocation. This Phocoena phocoena (Harbor porpoise) protein is NADH-ubiquinone oxidoreductase chain 4L (MT-ND4L).